Here is a 447-residue protein sequence, read N- to C-terminus: UDP-N-acetylmuramate--L-alanine ligase (447 aa).

ATP is bound at residue 108–114 (GSHGKTS).

It belongs to the MurCDEF family.

Its subcellular location is the cytoplasm. It catalyses the reaction UDP-N-acetyl-alpha-D-muramate + L-alanine + ATP = UDP-N-acetyl-alpha-D-muramoyl-L-alanine + ADP + phosphate + H(+). The protein operates within cell wall biogenesis; peptidoglycan biosynthesis. Cell wall formation. This Listeria monocytogenes serotype 4a (strain HCC23) protein is UDP-N-acetylmuramate--L-alanine ligase.